A 326-amino-acid chain; its full sequence is Photosystem II assembly factor Ycf39 (326 aa).

It belongs to the NmrA-type oxidoreductase family. Ycf39 subfamily. In terms of assembly, purified in several chlorophyll- and carotenoid-containing complexes, including photosystem II (PSII) assembly intermediate complex RCII* (iD1, D1, D2, PsbE, PsbF, PsbI, Ycf39, Ycf48, HliC and HliD) and the Ycf39-Hlip complex (Ycf39, HliC, HliD and pigments). Tagged protein does not pull down mature PSII.

Its subcellular location is the cellular thylakoid membrane. Requires HliD to bind pigments. The Ycf39-Hlip complex binds D1 at an early stage of PSII assembly along with Ycf48, ribosomes and ChlG, the last enzyme in chlorophyll biosynthesis; it may be involved in chlorophyll reuse and delivery to D1 in the initial stages of PSII assembly. The Ycf39-Hlip complex efficiently quenches chlorophyll fluorescence, contributing to photoprotection. The sequence is that of Photosystem II assembly factor Ycf39 from Synechocystis sp. (strain ATCC 27184 / PCC 6803 / Kazusa).